The sequence spans 102 residues: MMNTKKLMKMAKKWQQRAALRRKRISFQRSNSTTSSSSAVEKGCFVVYTADQVRFAFPISYLSNSVIQELLKISEEEFGIPTEGPITLPFDSIRFSWSISSN.

The protein belongs to the ARG7 family.

Its subcellular location is the cell membrane. Functionally, may promote auxin-stimulated organ elongation, such as hypocotyls, stamen filaments and petals. This is Auxin-responsive protein SAUR68 from Arabidopsis thaliana (Mouse-ear cress).